A 223-amino-acid chain; its full sequence is Ribonuclease 3 (223 aa).

The 124-residue stretch at 4–127 (LENLQKLLGY…VMGAVYLEAG (124 aa)) folds into the RNase III domain. Mg(2+) is bound at residue Glu-40. The active site involves Asp-44. Positions 113 and 116 each coordinate Mg(2+). The active site involves Glu-116. The DRBM domain occupies 154 to 223 (DYKTALQEIT…AKIALEKMKK (70 aa)).

The protein belongs to the ribonuclease III family. As to quaternary structure, homodimer. Mg(2+) serves as cofactor.

It localises to the cytoplasm. The catalysed reaction is Endonucleolytic cleavage to 5'-phosphomonoester.. Digests double-stranded RNA. Involved in the processing of primary rRNA transcript to yield the immediate precursors to the large and small rRNAs (23S and 16S). Processes some mRNAs, and tRNAs when they are encoded in the rRNA operon. Processes pre-crRNA and tracrRNA of type II CRISPR loci if present in the organism. This is Ribonuclease 3 from Campylobacter curvus (strain 525.92).